The sequence spans 361 residues: MRTDLFDFDLPPECIALRPAEPRDSARLLLVRPNVGVEDHSVRDLPGLLAPGDQIVVNDTKVIAAQLSGRRIGGTSEPHIDVTLIKRIDGSRWQALVRPARKLSEGDVLRFGNEGRVCLLGNLDASVEAKGEAGEVTLAFAFHGPVLDQAIADLGAPPLPPYIASRRAPDDKDVGDYQTMFAKNEGAVAAPTAGLHFTPALEAALAARGIGIQRLTLHVGAGTFLPVKADDTDDHKMHSEWGTVSEETAKTLNEARAKGGRVVAVGSTSMRLLESAATEDGIIQPFTGETAIFITPGYKFRAVDVMMTNFHLPRSTLFMLVSAFSGLDTMRAAYAHAIAKGYRFYSYGDACLLFRNAGAAS.

Belongs to the QueA family. As to quaternary structure, monomer.

The protein localises to the cytoplasm. The enzyme catalyses 7-aminomethyl-7-carbaguanosine(34) in tRNA + S-adenosyl-L-methionine = epoxyqueuosine(34) in tRNA + adenine + L-methionine + 2 H(+). The protein operates within tRNA modification; tRNA-queuosine biosynthesis. Its function is as follows. Transfers and isomerizes the ribose moiety from AdoMet to the 7-aminomethyl group of 7-deazaguanine (preQ1-tRNA) to give epoxyqueuosine (oQ-tRNA). This chain is S-adenosylmethionine:tRNA ribosyltransferase-isomerase, found in Afipia carboxidovorans (strain ATCC 49405 / DSM 1227 / KCTC 32145 / OM5) (Oligotropha carboxidovorans).